Consider the following 500-residue polypeptide: MSNMQQKTDVILIGAGIMSATLGSLLKELAPEWEIKVFEKLASAGEESSNEWNNAGTGHSALCELNYTSEKSDGSIDISKAVKVNEQFQLSRQFWAYLVKSKLIRNPQDFIMPLPHMSLVQGEKNVEFLKNRFEALSKNPLFQGMEFSDAPETLKKWLPLIMEGRTSNEPMAATKIDSGTDVNFGALTRMLFDYLQTKNVELNYKHSVENIKRTKNGLWEVKVHDINSGKIEHHTAKFVFIGGGGGSLPLLQKTGIPESKHIGGFPVSGLFMVCKNQKVVEQHHAKVYGKAKVGAPPMSVPHLDTRYIDNKKALLFGPFAGFSPKFLKTGSNLDLIGSVKPNNVLTMLAAGVKEMGLTKYLIQQVMLSHEKRMEELREFIPNAKSEDWDIVVAGQRVQVIKDTDAGGKGTLQFGTEVVSAADGSIAALLGASPGASTAVHVMLEVLEKCFPSRMVEWEGKIKEMIPSYGISLTENPRLFQDLHTSTGRTLGLNEKETVHN.

Belongs to the MQO family. FAD serves as cofactor.

The catalysed reaction is (S)-malate + a quinone = a quinol + oxaloacetate. It participates in carbohydrate metabolism; tricarboxylic acid cycle; oxaloacetate from (S)-malate (quinone route): step 1/1. This Bacillus thuringiensis (strain Al Hakam) protein is Probable malate:quinone oxidoreductase.